Here is a 652-residue protein sequence, read N- to C-terminus: RNA-binding KH domain-containing protein RCF3 (652 aa).

The segment covering 1-14 has biased composition (basic and acidic residues); the sequence is MERSRSKRNYHYDQ. The tract at residues 1-63 is disordered; the sequence is MERSRSKRNY…NGRPSKSHPE (63 aa). The segment covering 34–55 has biased composition (gly residues); the sequence is FGGGGGGNNRYRGGGGGGGGNG. KH domains follow at residues 67 to 139 and 175 to 245; these read TTTY…QEAL and RVVT…LAIV. The segment at 253–307 is disordered; sequence QHRDRSNFQGRSHSPERSFAAAGDDYMPQLRRQSSDRFPRGNFRNNNFSSRQSNY. Residues 292–306 show a composition bias toward low complexity; it reads RGNFRNNNFSSRQSN. KH domains follow at residues 324–391, 408–476, and 576–640; these read ELVF…QEAL, LITT…LVEL, and RSTL…QSLL.

As to quaternary structure, homodimer. Interacts with CPL1. Interacts with RS40 and RS41. Interacts with DRB1/HYL1 and SE. Interacts with CPL2. As to expression, expressed in roots, cotyledons, leaves, flowers and siliques.

It is found in the nucleus. The protein localises to the nucleus speckle. Functionally, acts as a negative regulator of osmotic stress-induced gene expression. Involved in the regulation of thermotolerance responses under heat stress. Functions as an upstream regulator of heat stress transcription factor (HSF) genes. Negatively regulates HSFA1A, HSFA1B and HSFA1D, but positively controls the expression of HSFA1E, HSFA3, HSFA9, HSFB3, and DREB2C. Forms a complex with CPL1 that modulates co-transcriptional processes such as mRNA capping and polyadenylation, and functions to repress stress-inducible gene expression. Regulates pre-mRNA processing under salt stress. Involved in primary miRNA processing and pri-miRNA biogenesis. Binds both intronless and intron-containing pri-miRNAs. Acts as a regulator of biotic stress response gene expression and basal JA-mediated responses involved in defense. Acts as a negative regulator of resistance to the fungal pathogen Fusarium oxysporum. The sequence is that of RNA-binding KH domain-containing protein RCF3 from Arabidopsis thaliana (Mouse-ear cress).